A 763-amino-acid chain; its full sequence is G protein-regulated inducer of neurite outgrowth 3 (763 aa).

Disordered stretches follow at residues 1–48 (MGTV…IGNV), 65–111 (QACV…APGL), and 192–268 (ENSQ…GATC). The segment covering 27–44 (ESQSVSPQPAQPDNNASG) has biased composition (polar residues). Residues 93–104 (KTPDDFLLHGSK) are compositionally biased toward basic and acidic residues. Residues 237–250 (ENKQPSATALNTTA) are compositionally biased toward polar residues. S323 and S359 each carry phosphoserine. Disordered stretches follow at residues 420-452 (TSSQ…PDFQ), 471-624 (NQGL…PRRG), and 711-737 (VKTQ…GRQH). The segment covering 437-450 (KEATSRQPEGTNPD) has biased composition (polar residues). Composition is skewed to basic and acidic residues over residues 480–496 (REPE…KAES) and 518–539 (PTDK…KDHA). Over residues 593 to 609 (SLSLPSDGTGDSSPGSG) the composition is skewed to low complexity.

Functionally, may be involved in neurite outgrowth. The polypeptide is G protein-regulated inducer of neurite outgrowth 3 (Gprin3) (Mus musculus (Mouse)).